A 300-amino-acid polypeptide reads, in one-letter code: MKIAILSRDGTLYSCKRLREAAIQRGHLVEILDPLSCYMNINPAASSIHYKGRKLPHFDAVIPRIGTAITFYGTAALRQFEMLGSYPLNESVAIARARDKLRSMQLLARQGIDLPVTGIAHSPDDTSDLIDMVGGAPLVVKLVEGTQGIGVVLAETRQAAESVIDAFRGLNAHILVQEYIKEAQGCDIRCLVVGDEVVAAIERRAKEGDFRSNLHRGGAASVASITPQEREIAIKAARTMALDVAGVDILRANRGPLVMEVNASPGLEGIEKTTGIDIASKMIRWIERHATTEYCLKTGG.

Residues 104-287 (MQLLARQGID…IASKMIRWIE (184 aa)) enclose the ATP-grasp domain. Residues K141, 178-179 (EY), D187, and 211-213 (RSN) contribute to the ATP site. Residues D248, E260, and N262 each contribute to the Mg(2+) site. Positions 248, 260, and 262 each coordinate Mn(2+).

Belongs to the RimK family. Mg(2+) serves as cofactor. Requires Mn(2+) as cofactor.

An L-glutamate ligase that catalyzes the ATP-dependent post-translational addition of glutamate residues to the C-terminus of ribosomal protein bS6 (RpsF). Is also able to catalyze the synthesis of poly-alpha-glutamate in vitro, via ATP hydrolysis from unprotected glutamate as substrate. The number of glutamate residues added to either RpsF or to poly-alpha-glutamate changes with pH. This Escherichia coli O81 (strain ED1a) protein is Ribosomal protein bS6--L-glutamate ligase.